Here is a 725-residue protein sequence, read N- to C-terminus: Lipoamidase (725 aa).

The disordered stretch occupies residues 1 to 52 (MLAQESILETTVQTETESVTTETSQTVANLESETTSQTVMQEKESSSAIAES). The segment covering 9–27 (ETTVQTETESVTTETSQTV) has biased composition (low complexity). The segment covering 28 to 40 (ANLESETTSQTVM) has biased composition (polar residues). Residues Lys-159 and Ser-235 each act as charge relay system in the active site. Ser-259 functions as the Acyl-ester intermediate in the catalytic mechanism. Residues 551–686 (KINQPHVEEP…NKSMIGKQEQ (136 aa)) form a disordered region. The segment covering 556–637 (HVEEPDKDKE…TSEGPIEGKD (82 aa)) has biased composition (basic and acidic residues). Residues 650–661 (SGSSLDNSLNSS) show a composition bias toward low complexity. The span at 662 to 679 (ANQGTKSTESTHAFSNKS) shows a compositional bias: polar residues. Residues 700–720 (PSTFWIVLGGAFLVTSGTIYI) form a helical membrane-spanning segment.

Belongs to the amidase family. As to quaternary structure, homodimer in solution.

The protein resides in the cell membrane. It carries out the reaction N(6)-[(R)-lipoyl]-L-lysyl-[lipoyl-carrier protein] + H2O = L-lysyl-[lipoyl-carrier protein] + (R)-lipoate. With respect to regulation, lipoamidase activity is slightly inhibited by p-chloromercuribenzoate. Functionally, amidohydrolase that releases lipoic acid from the protein-bound form. Cleaves the amide bond that links lipoic acid to the lipoylated lysine epsilon-amino groups, leading to the formation of free lipoic acid plus the unmodified protein. Shows activity toward both high molecular weight protein substrates such as a lipoyl domain and intact 2-oxoacid dehydrogenases as well as small molecule substrates such as lipoyl-lysine. Also acts on small biotinylated substrates. Hydrolyzes the synthetic substrates methyl lipoate and lipoamide. The physiologically important substrates are probably lipoyl-lysine and small peptides containing lipoyl-lysine. Lpa seems likely to enable this bacterium to utilize amide-linked forms of lipoic acid that otherwise could not be assimilated. The protein is Lipoamidase of Enterococcus faecalis (Streptococcus faecalis).